The chain runs to 335 residues: Ketol-acid reductoisomerase (NADP(+)) (335 aa).

Positions 5 to 185 constitute a KARI N-terminal Rossmann domain; sequence SKIYTDKDSN…GATRAGVIPT (181 aa). Residues 28-31, Ser-56, and 86-89 contribute to the NADP(+) site; these read YGSQ and DMVQ. The active site involves His-111. Gly-137 is an NADP(+) binding site. Residues 186 to 331 form the KARI C-terminal knotted domain; that stretch reads TFKEETETDL…NQLKDLIQKG (146 aa). Mg(2+) is bound by residues Asp-194, Glu-198, Glu-230, and Glu-234. Ser-255 is a substrate binding site.

This sequence belongs to the ketol-acid reductoisomerase family. Mg(2+) is required as a cofactor.

It carries out the reaction (2R)-2,3-dihydroxy-3-methylbutanoate + NADP(+) = (2S)-2-acetolactate + NADPH + H(+). The enzyme catalyses (2R,3R)-2,3-dihydroxy-3-methylpentanoate + NADP(+) = (S)-2-ethyl-2-hydroxy-3-oxobutanoate + NADPH + H(+). The protein operates within amino-acid biosynthesis; L-isoleucine biosynthesis; L-isoleucine from 2-oxobutanoate: step 2/4. It functions in the pathway amino-acid biosynthesis; L-valine biosynthesis; L-valine from pyruvate: step 2/4. Its function is as follows. Involved in the biosynthesis of branched-chain amino acids (BCAA). Catalyzes an alkyl-migration followed by a ketol-acid reduction of (S)-2-acetolactate (S2AL) to yield (R)-2,3-dihydroxy-isovalerate. In the isomerase reaction, S2AL is rearranged via a Mg-dependent methyl migration to produce 3-hydroxy-3-methyl-2-ketobutyrate (HMKB). In the reductase reaction, this 2-ketoacid undergoes a metal-dependent reduction by NADPH to yield (R)-2,3-dihydroxy-isovalerate. In Saccharolobus islandicus (strain Y.G.57.14 / Yellowstone #1) (Sulfolobus islandicus), this protein is Ketol-acid reductoisomerase (NADP(+)).